The primary structure comprises 192 residues: UPF0316 protein SSP0880 (192 aa).

The next 3 membrane-spanning stretches (helical) occupy residues 8 to 28 (PWLM…CLTM), 40 to 60 (VAAI…GMVM), and 66 to 86 (IQNV…GMKI).

Belongs to the UPF0316 family.

It localises to the cell membrane. The polypeptide is UPF0316 protein SSP0880 (Staphylococcus saprophyticus subsp. saprophyticus (strain ATCC 15305 / DSM 20229 / NCIMB 8711 / NCTC 7292 / S-41)).